Here is a 270-residue protein sequence, read N- to C-terminus: Phosphatidylinositol transfer protein alpha isoform (270 aa).

Thr-58, Lys-60, Glu-85, Asn-89, Thr-96, and Lys-194 together coordinate a 1,2-diacyl-sn-glycero-3-phospho-(1D-myo-inositol). Lys-215 carries the N6-acetyllysine modification.

This sequence belongs to the PtdIns transfer protein family. PI transfer class I subfamily. In terms of processing, phosphorylated by PKC in a calcium and phosphatidylserine-dependent manner.

It is found in the cytoplasm. Its subcellular location is the nucleus. The enzyme catalyses a 1,2-diacyl-sn-glycero-3-phosphocholine(in) = a 1,2-diacyl-sn-glycero-3-phosphocholine(out). It catalyses the reaction a 1,2-diacyl-sn-glycero-3-phospho-(1D-myo-inositol)(in) = a 1,2-diacyl-sn-glycero-3-phospho-(1D-myo-inositol)(out). Catalyzes the transfer of phosphatidylinositol (PI) and phosphatidylcholine (PC) between membranes. Shows a preference for PI and PC containing shorter saturated or monosaturated acyl chains at the sn-1 and sn-2 positions. Preference order for PC is C16:1 &gt; C16:0 &gt; C18:1 &gt; C18:0 &gt; C20:4 and for PI is C16:1 &gt; C16:0 &gt; C18:1 &gt; C18:0 &gt; C20:4 &gt; C20:3. The polypeptide is Phosphatidylinositol transfer protein alpha isoform (PITPNA) (Bos taurus (Bovine)).